The chain runs to 149 residues: Transcriptional regulator MraZ (149 aa).

SpoVT-AbrB domains lie at 7-54 (KYVN…GISH) and 83-126 (AVQL…QPQN).

The protein belongs to the MraZ family. As to quaternary structure, forms oligomers.

It is found in the cytoplasm. It localises to the nucleoid. The protein is Transcriptional regulator MraZ of Rickettsia akari (strain Hartford).